An 862-amino-acid chain; its full sequence is DNA replication licensing factor MCM4 (862 aa).

The segment covering 1–10 (MSSPASTPSR) has biased composition (low complexity). 2 disordered regions span residues 1-71 (MSSP…FSSP) and 90-121 (TYGT…GSAR). Ser2 is subject to N-acetylserine. A Phosphoserine modification is found at Ser6. Phosphothreonine is present on residues Thr7 and Thr19. Phosphoserine occurs at positions 26, 31, and 32. A compositionally biased stretch (polar residues) spans 61–71 (PPAQNALFSSP). Residue Thr101 is modified to Phosphothreonine. Ser104 is subject to Phosphoserine. Residue Thr109 is modified to Phosphothreonine. Phosphoserine is present on residues Ser119, Ser130, Ser141, and Ser144. N6-acetyllysine is present on Lys219. Lys438 is covalently cross-linked (Glycyl lysine isopeptide (Lys-Gly) (interchain with G-Cter in SUMO2)). The residue at position 449 (Lys449) is an N6-acetyllysine. The region spanning 457–666 (IYERLASALA…YDRRLAHHLV (210 aa)) is the MCM domain. Tyr470, Arg496, Lys515, Ser516, Asn617, Arg642, Arg731, and Glu734 together coordinate ATP. Positions 641-644 (SRFD) match the Arginine finger motif. A Glycyl lysine isopeptide (Lys-Gly) (interchain with G-Cter in SUMO2) cross-link involves residue Lys797. An N6-acetyllysine modification is found at Lys857.

Belongs to the MCM family. In terms of assembly, component of the MCM2-7 complex. The complex forms a toroidal hexameric ring with the proposed subunit order MCM2-MCM6-MCM4-MCM7-MCM3-MCM5. Component of the CMG helicase complex, a hexameric ring of related MCM2-7 subunits stabilized by CDC45 and the tetrameric GINS complex. Interacts with MCMBP. Post-translationally, sumoylated; SUMO2 modified in response to stress caused by inhibition of proteasome activity (in vitro).

The protein localises to the nucleus. It localises to the chromosome. It catalyses the reaction ATP + H2O = ADP + phosphate + H(+). Functionally, acts as a component of the MCM2-7 complex (MCM complex) which is the replicative helicase essential for 'once per cell cycle' DNA replication initiation and elongation in eukaryotic cells. Core component of CDC45-MCM-GINS (CMG) helicase, the molecular machine that unwinds template DNA during replication, and around which the replisome is built. The active ATPase sites in the MCM2-7 ring are formed through the interaction surfaces of two neighboring subunits such that a critical structure of a conserved arginine finger motif is provided in trans relative to the ATP-binding site of the Walker A box of the adjacent subunit. The six ATPase active sites, however, are likely to contribute differentially to the complex helicase activity. In Mus musculus (Mouse), this protein is DNA replication licensing factor MCM4 (Mcm4).